Reading from the N-terminus, the 527-residue chain is Acyl-coenzyme A thioesterase 4, mitochondrial (527 aa).

A mitochondrion-targeting transit peptide spans 1–75 (MMTPIGIRIR…FLFDPPPIRF (75 aa)). 2 HotDog ACOT-type domains span residues 172–294 (ILYN…RDSK) and 370–487 (KDTC…GPEA).

Belongs to the acyl coenzyme A hydrolase family. Mostly expressed at low levels in glandular trichomes (lupulin glands), and, to a lower extent, in stems, leaves, flowers and cones.

The protein resides in the mitochondrion. The catalysed reaction is 2-methylpropanoyl-CoA + H2O = 2-methylpropanoate + CoA + H(+). The enzyme catalyses propanoyl-CoA + H2O = propanoate + CoA + H(+). It catalyses the reaction octanoyl-CoA + H2O = octanoate + CoA + H(+). It carries out the reaction butanoyl-CoA + H2O = butanoate + CoA + H(+). The catalysed reaction is 3-methylbutanoyl-CoA + H2O = 3-methylbutanoate + CoA + H(+). The enzyme catalyses 2-methylbutanoyl-CoA + H2O = 2-methylbutanoate + CoA + H(+). Its function is as follows. Acyl-CoA thioesterases are a group of enzymes that catalyze the hydrolysis of acyl-CoAs to the free fatty acid and coenzyme A (CoASH), providing the potential to regulate intracellular levels of acyl-CoAs, free fatty acids and CoASH. Active on acyl CoAs with short chains (propanoyl-CoA and butanoyl-CoA), branched short chains (2-methylpropanoyl-CoA, 2-methylbutanoyl-CoA and 3-methylbutanoyl-CoA) and medium chains (octanoyl-CoA). This is Acyl-coenzyme A thioesterase 4, mitochondrial from Humulus lupulus (European hop).